Here is a 291-residue protein sequence, read N- to C-terminus: Proteasome subunit beta (291 aa).

Residues 1–57 (MTWPLPDRLSINSLSGTPAVDLSSFTDFLRRQAPELLPASISGGAPLAGGDAQLPHG) constitute a propeptide, removed in mature form; by autocatalysis. The active-site Nucleophile is the T58.

It belongs to the peptidase T1B family. The 20S proteasome core is composed of 14 alpha and 14 beta subunits that assemble into four stacked heptameric rings, resulting in a barrel-shaped structure. The two inner rings, each composed of seven catalytic beta subunits, are sandwiched by two outer rings, each composed of seven alpha subunits. The catalytic chamber with the active sites is on the inside of the barrel. Has a gated structure, the ends of the cylinder being occluded by the N-termini of the alpha-subunits. Is capped by the proteasome-associated ATPase, ARC.

It is found in the cytoplasm. The enzyme catalyses Cleavage of peptide bonds with very broad specificity.. The protein operates within protein degradation; proteasomal Pup-dependent pathway. Its activity is regulated as follows. The formation of the proteasomal ATPase ARC-20S proteasome complex, likely via the docking of the C-termini of ARC into the intersubunit pockets in the alpha-rings, may trigger opening of the gate for substrate entry. Interconversion between the open-gate and close-gate conformations leads to a dynamic regulation of the 20S proteasome proteolysis activity. Functionally, component of the proteasome core, a large protease complex with broad specificity involved in protein degradation. The protein is Proteasome subunit beta of Mycobacterium tuberculosis (strain ATCC 25177 / H37Ra).